A 253-amino-acid chain; its full sequence is Prepilin leader peptidase/N-methyltransferase (253 aa).

A helical transmembrane segment spans residues Val-4–Ile-24. Zn(2+)-binding residues include Cys-48, Cys-51, Cys-73, and Cys-76. 6 consecutive transmembrane segments (helical) span residues Ile-80 to Trp-100, Val-106 to Phe-126, Met-129 to Gln-149, Ile-159 to Phe-179, Thr-198 to Ile-218, and Cys-230 to Ile-250.

The protein belongs to the peptidase A24 family. It depends on Zn(2+) as a cofactor.

Its subcellular location is the cell inner membrane. It catalyses the reaction Typically cleaves a -Gly-|-Phe- bond to release an N-terminal, basic peptide of 5-8 residues from type IV prepilin, and then N-methylates the new N-terminal amino group, the methyl donor being S-adenosyl-L-methionine.. Plays an essential role in type IV pili and type II pseudopili formation by proteolytically removing the leader sequence from substrate proteins and subsequently monomethylating the alpha-amino group of the newly exposed N-terminal phenylalanine. This Vibrio cholerae serotype O1 (strain ATCC 39315 / El Tor Inaba N16961) protein is Prepilin leader peptidase/N-methyltransferase (tcpJ).